Reading from the N-terminus, the 400-residue chain is Cartilage-associated protein (400 aa).

The N-terminal stretch at 1–25 (MGPRSPTAALLVLLCVGCAPTPGRG) is a signal peptide. 2 N-linked (GlcNAc...) asparagine glycosylation sites follow: Asn-86 and Asn-362.

It belongs to the leprecan family. In terms of tissue distribution, found in articular chondrocytes. Expressed in a variety of tissues.

The protein localises to the secreted. It localises to the extracellular space. It is found in the extracellular matrix. Necessary for efficient 3-hydroxylation of fibrillar collagen prolyl residues. The sequence is that of Cartilage-associated protein (Crtap) from Mus musculus (Mouse).